The sequence spans 303 residues: Sulfate adenylyltransferase subunit 2 (303 aa).

It belongs to the PAPS reductase family. CysD subfamily. Heterodimer composed of CysD, the smaller subunit, and CysN.

It catalyses the reaction sulfate + ATP + H(+) = adenosine 5'-phosphosulfate + diphosphate. It participates in sulfur metabolism; hydrogen sulfide biosynthesis; sulfite from sulfate: step 1/3. With CysN forms the ATP sulfurylase (ATPS) that catalyzes the adenylation of sulfate producing adenosine 5'-phosphosulfate (APS) and diphosphate, the first enzymatic step in sulfur assimilation pathway. APS synthesis involves the formation of a high-energy phosphoric-sulfuric acid anhydride bond driven by GTP hydrolysis by CysN coupled to ATP hydrolysis by CysD. The protein is Sulfate adenylyltransferase subunit 2 of Sulfurimonas denitrificans (strain ATCC 33889 / DSM 1251) (Thiomicrospira denitrificans (strain ATCC 33889 / DSM 1251)).